The sequence spans 975 residues: Probable outer membrane protein PmpA (975 aa).

The N-terminal stretch at 1-51 (MNRVIEIHAHYDQRQLSQSPNTNFLVHHPYLTLIPKFLLGALIVYAPYSFA) is a signal peptide. Residues 699-975 (RSLIPTSYFG…SLSCGGYVGF (277 aa)) form the Autotransporter domain.

It belongs to the PMP outer membrane protein family.

The protein resides in the secreted. It localises to the cell wall. Its subcellular location is the cell outer membrane. The chain is Probable outer membrane protein PmpA (pmpA) from Chlamydia trachomatis serovar D (strain ATCC VR-885 / DSM 19411 / UW-3/Cx).